The following is a 1415-amino-acid chain: DNA-directed RNA polymerase subunit beta' (1415 aa).

Positions 72, 74, 87, and 90 each coordinate Zn(2+). Asp463, Asp465, and Asp467 together coordinate Mg(2+). The Zn(2+) site is built by Cys812, Cys886, Cys893, and Cys896.

Belongs to the RNA polymerase beta' chain family. The RNAP catalytic core consists of 2 alpha, 1 beta, 1 beta' and 1 omega subunit. When a sigma factor is associated with the core the holoenzyme is formed, which can initiate transcription. It depends on Mg(2+) as a cofactor. Zn(2+) serves as cofactor.

It catalyses the reaction RNA(n) + a ribonucleoside 5'-triphosphate = RNA(n+1) + diphosphate. DNA-dependent RNA polymerase catalyzes the transcription of DNA into RNA using the four ribonucleoside triphosphates as substrates. The protein is DNA-directed RNA polymerase subunit beta' of Dinoroseobacter shibae (strain DSM 16493 / NCIMB 14021 / DFL 12).